The sequence spans 94 residues: Large ribosomal subunit protein bL31 (94 aa).

The disordered stretch occupies residues 65–94; it reads YGMADSENDSTDKKKTTNEKKVSDSPSKES. Basic and acidic residues predominate over residues 74–94; that stretch reads STDKKKTTNEKKVSDSPSKES.

It belongs to the bacterial ribosomal protein bL31 family. Type A subfamily. Part of the 50S ribosomal subunit.

In terms of biological role, binds the 23S rRNA. This chain is Large ribosomal subunit protein bL31, found in Prochlorococcus marinus (strain MIT 9211).